Reading from the N-terminus, the 495-residue chain is Hydroxyneurosporene desaturase (495 aa).

The protein belongs to the carotenoid/retinoid oxidoreductase family.

It carries out the reaction rhodopin + A = (3E)-3,4-didehydrorhodopin + AH2. Its pathway is carotenoid biosynthesis; spheroidene biosynthesis. Functionally, catalyzes the introduction of C-3,4 double bonds into 1-hydroxyneurosporene (1-HO-Neu) to yield demethylspheroidene (DMS). It prefer the acyclic carotenoids such as 1-hydroxylycopene, and 1-hydroxy-gamma-carotene, whereas 1-hydroxy-3,4-didehydrolycopene and 1,1-dihydroxylycopene are much less effective. The protein is Hydroxyneurosporene desaturase (crtD) of Cereibacter sphaeroides (strain ATCC 17023 / DSM 158 / JCM 6121 / CCUG 31486 / LMG 2827 / NBRC 12203 / NCIMB 8253 / ATH 2.4.1.) (Rhodobacter sphaeroides).